Consider the following 264-residue polypeptide: DNA-binding HTH-type transcriptional repressor TrmBL2 (264 aa).

Residues 81 to 113 are a coiled coil; that stretch reads LEKFIEEWQERVKEELEAKKKAKEELIELMKPL.

It belongs to the transcriptional regulator TrmB family.

The protein resides in the cytoplasm. It localises to the chromosome. An abundant chromosomal protein that seems to be involved in both genome architecture and transcription repression. Incubation with DNA in vitro gives fibrous structures 14.2 +/- 2.1 nm in thickness (naked DNA is 1.83 +/- 0.37 nm); does not significantly compact DNA. Binds to both coding and non-coding regions; binding within gene promoters correlates with decreased transcript levels, while binding within coding regions does not. The sequence is that of DNA-binding HTH-type transcriptional repressor TrmBL2 from Thermococcus kodakarensis (strain ATCC BAA-918 / JCM 12380 / KOD1) (Pyrococcus kodakaraensis (strain KOD1)).